Reading from the N-terminus, the 177-residue chain is Large ribosomal subunit protein uL5c (177 aa).

This sequence belongs to the universal ribosomal protein uL5 family. In terms of assembly, part of the 50S ribosomal subunit; contacts the 5S rRNA.

Its subcellular location is the plastid. It is found in the chloroplast. In terms of biological role, binds 5S rRNA, forms part of the central protuberance of the 50S subunit. This is Large ribosomal subunit protein uL5c (rpl5) from Cyanidioschyzon merolae (strain NIES-3377 / 10D) (Unicellular red alga).